The chain runs to 300 residues: 4-diphosphocytidyl-2-C-methyl-D-erythritol kinase (300 aa).

Lys12 is a catalytic residue. 94–104 (PAQAGIGGGSS) serves as a coordination point for ATP. Asp136 is an active-site residue.

The protein belongs to the GHMP kinase family. IspE subfamily.

The catalysed reaction is 4-CDP-2-C-methyl-D-erythritol + ATP = 4-CDP-2-C-methyl-D-erythritol 2-phosphate + ADP + H(+). The protein operates within isoprenoid biosynthesis; isopentenyl diphosphate biosynthesis via DXP pathway; isopentenyl diphosphate from 1-deoxy-D-xylulose 5-phosphate: step 3/6. Catalyzes the phosphorylation of the position 2 hydroxy group of 4-diphosphocytidyl-2C-methyl-D-erythritol. This is 4-diphosphocytidyl-2-C-methyl-D-erythritol kinase from Verminephrobacter eiseniae (strain EF01-2).